Here is a 741-residue protein sequence, read N- to C-terminus: Translation initiation factor IF-2 (741 aa).

Composition is skewed to basic and acidic residues over residues 48-74 (HQYR…DKPK) and 107-123 (KGKE…EKKA). The interval 48–158 (HQYRPKAEKK…PQPAKKEKEL (111 aa)) is disordered. Positions 127-139 (AKKKGKGPAKGKK) are enriched in basic residues. The span at 140 to 151 (QAAPAAKQVPQP) shows a compositional bias: low complexity. The 170-residue stretch at 242–411 (ERPPVVTIMG…LLVSEMEELK (170 aa)) folds into the tr-type G domain. The tract at residues 251–258 (GHVDHGKT) is G1. 251 to 258 (GHVDHGKT) is a GTP binding site. The tract at residues 276–280 (GITQH) is G2. Residues 297–300 (DTPG) are G3. Residues 297–301 (DTPGH) and 351–354 (NKMD) each bind GTP. The segment at 351–354 (NKMD) is G4. The G5 stretch occupies residues 387 to 389 (SAK).

The protein belongs to the TRAFAC class translation factor GTPase superfamily. Classic translation factor GTPase family. IF-2 subfamily.

The protein localises to the cytoplasm. One of the essential components for the initiation of protein synthesis. Protects formylmethionyl-tRNA from spontaneous hydrolysis and promotes its binding to the 30S ribosomal subunits. Also involved in the hydrolysis of GTP during the formation of the 70S ribosomal complex. The chain is Translation initiation factor IF-2 (infB) from Geobacillus stearothermophilus (Bacillus stearothermophilus).